A 1487-amino-acid polypeptide reads, in one-letter code: Major viral transcription factor (1487 aa).

Disordered stretches follow at residues 41–295 (AAPD…LPPG), 310–371 (LAKT…EEAP), 409–442 (REPLLTPSGDPWPGSDPPPMGRVRYGGTGDSRDG), and 803–1007 (PPTR…HTPR). Over residues 66 to 75 (VIPPPSPAPE) the composition is skewed to pro residues. Low complexity-rich tracts occupy residues 165-193 (PSSASPGGGSPAPRVRSISISSSSSSSSS) and 201-213 (DGAGASSSSSSSS). The span at 214–224 (DDSDSDEGGEE) shows a compositional bias: acidic residues. Low complexity predominate over residues 235–272 (AAKTPSAAGSPGPSSGGDRPAAGAATPKSCRSGAASPG). The span at 273–285 (APAPAPASAPAPS) shows a compositional bias: pro residues. Low complexity-rich tracts occupy residues 807 to 829 (SQQPSSSSPGGEPFSGSAAAEGS), 849 to 860 (PSSHSQSPQHSQ), and 867 to 877 (ATTATCCRATQ). The span at 878-893 (TNARSRGQQHQPQKAR) shows a compositional bias: polar residues. Positions 920-929 (HGRPRGKSGK) are enriched in basic residues. Positions 938-951 (AAQAGASASFSSSA) are enriched in low complexity. Residues 988 to 1007 (GPDRRGGFRRVPRGDCHTPR) are compositionally biased toward basic and acidic residues.

Belongs to the herpesviridae ICP4 family. In terms of processing, a long stretch of serine residues may be a major site of phosphorylation.

It is found in the host nucleus. In terms of biological role, this IE protein is a multifunctional protein capable of migrating to the nucleus, binding to DNA, trans-activating other viral genes, and autoregulating its own synthesis. The protein is Major viral transcription factor (IE) of Equine herpesvirus 1 (strain Kentucky A) (EHV-1).